We begin with the raw amino-acid sequence, 980 residues long: SLIT and NTRK-like protein 3 (980 aa).

Positions 1–27 (MMKPSIAEMLHRGRMLWIILLSTIALG) are cleaved as a signal peptide. Residues 30-655 (TPIPLIEDSE…SPPGGPVPLS (626 aa)) are Extracellular-facing. A glycan (N-linked (GlcNAc...) asparagine) is linked at Asn-69. LRR repeat units follow at residues 79–100 (RPFK…SFLH), 103–124 (NAVS…AFNG), 127–148 (ILKR…TFLG), 151–172 (SLEY…AFRN), 175–196 (KLRV…LFKA), and 198–219 (SLTH…GMLD). Positions 233–284 (NPWNCTCEIVQLKSWLERIPYTALVGDITCETPFHFHGKDLREIKKTELCPL) constitute an LRRCT 1 domain. The interval 326 to 361 (EYKSSNKQPKPTKQPRTPRPPSTSQALYPGPNQPPI) is disordered. The 43-residue stretch at 365-407 (QTRPPIPIICPTGCTCNLHINDLGLTVNCKERGFNNISELLPR) folds into the LRRNT domain. LRR repeat units follow at residues 410–431 (NAKK…DFWN), 434–455 (SLDL…AFIN), 458–479 (NLKS…MFRG), 482–503 (SLHY…AFSL), 506–527 (NLKL…AFAG), and 529–550 (SLAR…GVLE). The 52-residue stretch at 563–614 (NPWDCTCDLVPFKQWIETISSVSVVGDVLCRTPENLTHRDVRTIELEVLCPE) folds into the LRRCT 2 domain. A glycan (N-linked (GlcNAc...) asparagine) is linked at Asn-597. The segment at 622–644 (GPSPPQPGDYHPNGGPTSASPYE) is disordered. The helical transmembrane segment at 656–676 (VLILSLLVLFFSAVFVAAGLF) threads the bilayer. Residues 677-980 (AYVLRRRRKK…EVLEKTAYRF (304 aa)) are Cytoplasmic-facing. Disordered stretches follow at residues 709 to 735 (LFED…EKAP) and 762 to 785 (EEEV…GTQP). Residues 715–725 (GNSGGSGGGGR) show a composition bias toward gly residues.

The protein belongs to the SLITRK family. As to expression, broadly expressed in embryonic brain with highest expression in cortical plate, pyramidal cell layer of the hippocampus, thalamus and hypothalamus.

The protein resides in the membrane. In terms of biological role, suppresses neurite outgrowth. In Mus musculus (Mouse), this protein is SLIT and NTRK-like protein 3 (Slitrk3).